Consider the following 118-residue polypeptide: Small ribosomal subunit protein uS13 (118 aa).

Residues 91-118 (HRHSLPVRGQRTKTNARTRKGPRKPIRK) form a disordered region.

This sequence belongs to the universal ribosomal protein uS13 family. As to quaternary structure, part of the 30S ribosomal subunit. Forms a loose heterodimer with protein S19. Forms two bridges to the 50S subunit in the 70S ribosome.

In terms of biological role, located at the top of the head of the 30S subunit, it contacts several helices of the 16S rRNA. In the 70S ribosome it contacts the 23S rRNA (bridge B1a) and protein L5 of the 50S subunit (bridge B1b), connecting the 2 subunits; these bridges are implicated in subunit movement. Contacts the tRNAs in the A and P-sites. In Hahella chejuensis (strain KCTC 2396), this protein is Small ribosomal subunit protein uS13.